Reading from the N-terminus, the 788-residue chain is Response regulator SSK1 (788 aa).

A Response regulatory domain is found at 534 to 691 (NVLIVEDNII…WLERKVKEWG (158 aa)). D583 is modified (4-aspartylphosphate).

The protein belongs to the SSK1 family.

It is found in the cytoplasm. Its function is as follows. Two-domain response regulator protein in the two-component signal transduction system of the HOG1 pathway. Controls high-osmolarity adaptation and fungicide sensitivity via its regulation of the phosphorylation of HOG1. The protein is Response regulator SSK1 of Cochliobolus heterostrophus (strain C5 / ATCC 48332 / race O) (Southern corn leaf blight fungus).